We begin with the raw amino-acid sequence, 338 residues long: D-erythrose-4-phosphate dehydrogenase (338 aa).

11-12 (RI) contributes to the NAD(+) binding site. Substrate is bound by residues 153 to 155 (SCT), Arg199, 212 to 213 (TK), and Arg235. Cys154 serves as the catalytic Nucleophile. Asn317 contributes to the NAD(+) binding site.

It belongs to the glyceraldehyde-3-phosphate dehydrogenase family. Epd subfamily. In terms of assembly, homotetramer.

Its subcellular location is the cytoplasm. It catalyses the reaction D-erythrose 4-phosphate + NAD(+) + H2O = 4-phospho-D-erythronate + NADH + 2 H(+). Its pathway is cofactor biosynthesis; pyridoxine 5'-phosphate biosynthesis; pyridoxine 5'-phosphate from D-erythrose 4-phosphate: step 1/5. In terms of biological role, catalyzes the NAD-dependent conversion of D-erythrose 4-phosphate to 4-phosphoerythronate. The protein is D-erythrose-4-phosphate dehydrogenase of Shewanella oneidensis (strain ATCC 700550 / JCM 31522 / CIP 106686 / LMG 19005 / NCIMB 14063 / MR-1).